Consider the following 108-residue polypeptide: Ig kappa chain V region K-25 (108 aa).

The interval alanine 1–cysteine 23 is framework-1. The complementarity-determining-1 stretch occupies residues glutamine 24–serine 34. A framework-2 region spans residues tryptophan 35–tyrosine 49. The tract at residues lysine 50–serine 56 is complementarity-determining-2. Residues glycine 57–cysteine 88 form a framework-3 region. Residues glutamine 89–tyrosine 97 are complementarity-determining-3. The framework-4 stretch occupies residues phenylalanine 98–lysine 107.

The protein is Ig kappa chain V region K-25 of Oryctolagus cuniculus (Rabbit).